A 1468-amino-acid polypeptide reads, in one-letter code: DNA polymerase alpha catalytic subunit A (1468 aa).

The span at 1–12 (MSSKSEKLEKLR) shows a compositional bias: basic and acidic residues. 3 disordered regions span residues 1–34 (MSSK…SDGD), 71–135 (GVEE…KKSI), and 166–205 (NLNS…PDSS). At S2 the chain carries N-acetylserine. S31 carries the post-translational modification Phosphoserine. Over residues 71-80 (GVEEDWREVD) the composition is skewed to basic and acidic residues. A phosphoserine mark is found at S82, S83, S84, S169, and S170. Over residues 166–176 (NLNSSPTSEFK) the composition is skewed to polar residues. T172 carries the phosphothreonine modification. A compositionally biased stretch (basic and acidic residues) spans 183–205 (NGNDESSHDAGISKKVKIDPDSS). Residues S240 and S274 each carry the phosphoserine modification. Positions 256–275 (LANPPSAQSLADEEDDEDSD) are disordered. Over residues 266 to 275 (ADEEDDEDSD) the composition is skewed to acidic residues. Phosphothreonine is present on residues T309 and T313. The tract at residues 813-837 (PDKEGNRSRAQKQRQNEENADAPVN) is disordered. The segment at 1246–1381 (KKYFRREGGN…CTGVMRYKYS (136 aa)) is DNA-binding. The Zn(2+) site is built by C1287, C1290, C1314, C1317, C1348, C1353, C1367, and C1372. The segment at 1287–1317 (CPSCDKRFPFGGIVSSNYYRVSYNGLQCKHC) adopts a CysA-type zinc-finger fold. The short motif at 1348–1372 (CDDSTCGIVTRQVSVFGKRCLNDGC) is the CysB motif element.

Belongs to the DNA polymerase type-B family. In terms of assembly, DNA polymerase alpha:primase is a four subunit enzyme complex, which is assembled throughout the cell cycle, and consists of the two DNA polymerase subunits A POL1 and B POL12, and the DNA primase large PRI2 and small PRI1 subunits. Subunit B POL12 binds to subunit A POL1. POL1 interacts with CDC13, POB3, SPT16 and MCM10.

The protein resides in the nucleus. It catalyses the reaction DNA(n) + a 2'-deoxyribonucleoside 5'-triphosphate = DNA(n+1) + diphosphate. Catalytic component of DNA polymerase alpha, which in complex with DNA primase (DNA polymerase alpha:primase) constitutes a replicative polymerase. POL1 has a role in promoting telomere replication during interaction with CDC13. The protein is DNA polymerase alpha catalytic subunit A (POL1) of Saccharomyces cerevisiae (strain ATCC 204508 / S288c) (Baker's yeast).